Consider the following 207-residue polypeptide: Small ribosomal subunit protein uS4 (207 aa).

The segment at 31 to 55 is disordered; it reads KCKLDSKPGQHGRTSGARTSDYGTQ. The span at 42–53 shows a compositional bias: polar residues; the sequence is GRTSGARTSDYG. An S4 RNA-binding domain is found at 97–160; the sequence is SRLDNVVYRM…KKQARIIEAL (64 aa).

Belongs to the universal ribosomal protein uS4 family. As to quaternary structure, part of the 30S ribosomal subunit. Contacts protein S5. The interaction surface between S4 and S5 is involved in control of translational fidelity.

Its function is as follows. One of the primary rRNA binding proteins, it binds directly to 16S rRNA where it nucleates assembly of the body of the 30S subunit. With S5 and S12 plays an important role in translational accuracy. The sequence is that of Small ribosomal subunit protein uS4 from Burkholderia vietnamiensis (strain G4 / LMG 22486) (Burkholderia cepacia (strain R1808)).